Here is a 757-residue protein sequence, read N- to C-terminus: Endonuclease MutS2 (757 aa).

Residue 321–328 participates in ATP binding; sequence GPNMGGKT. Positions 681–756 constitute a Smr domain; that stretch reads IDIRGMTVEE…GTGVTVVEVK (76 aa).

It belongs to the DNA mismatch repair MutS family. MutS2 subfamily. As to quaternary structure, homodimer. Binds to stalled ribosomes, contacting rRNA.

Endonuclease that is involved in the suppression of homologous recombination and thus may have a key role in the control of bacterial genetic diversity. Its function is as follows. Acts as a ribosome collision sensor, splitting the ribosome into its 2 subunits. Detects stalled/collided 70S ribosomes which it binds and splits by an ATP-hydrolysis driven conformational change. Acts upstream of the ribosome quality control system (RQC), a ribosome-associated complex that mediates the extraction of incompletely synthesized nascent chains from stalled ribosomes and their subsequent degradation. Probably generates substrates for RQC. The polypeptide is Endonuclease MutS2 (Thermotoga sp. (strain RQ2)).